We begin with the raw amino-acid sequence, 238 residues long: 1-(5-phosphoribosyl)-5-[(5-phosphoribosylamino)methylideneamino] imidazole-4-carboxamide isomerase (238 aa).

Catalysis depends on Asp-8, which acts as the Proton acceptor. The active-site Proton donor is the Asp-129.

It belongs to the HisA/HisF family.

It is found in the cytoplasm. The catalysed reaction is 1-(5-phospho-beta-D-ribosyl)-5-[(5-phospho-beta-D-ribosylamino)methylideneamino]imidazole-4-carboxamide = 5-[(5-phospho-1-deoxy-D-ribulos-1-ylimino)methylamino]-1-(5-phospho-beta-D-ribosyl)imidazole-4-carboxamide. It participates in amino-acid biosynthesis; L-histidine biosynthesis; L-histidine from 5-phospho-alpha-D-ribose 1-diphosphate: step 4/9. This Clostridium kluyveri (strain NBRC 12016) protein is 1-(5-phosphoribosyl)-5-[(5-phosphoribosylamino)methylideneamino] imidazole-4-carboxamide isomerase.